Consider the following 82-residue polypeptide: Exodeoxyribonuclease 7 small subunit (82 aa).

The protein belongs to the XseB family. As to quaternary structure, heterooligomer composed of large and small subunits.

Its subcellular location is the cytoplasm. The catalysed reaction is Exonucleolytic cleavage in either 5'- to 3'- or 3'- to 5'-direction to yield nucleoside 5'-phosphates.. In terms of biological role, bidirectionally degrades single-stranded DNA into large acid-insoluble oligonucleotides, which are then degraded further into small acid-soluble oligonucleotides. This Colwellia psychrerythraea (strain 34H / ATCC BAA-681) (Vibrio psychroerythus) protein is Exodeoxyribonuclease 7 small subunit.